The primary structure comprises 339 residues: Geranylgeranyl transferase type-2 subunit beta (339 aa).

Position 11 is a phosphothreonine (Thr11). PFTB repeat units follow at residues 28–69 (LEKH…DLMG), 76–117 (REEI…TLYD), 124–165 (VDKV…ALLG), 172–213 (VEKA…AITS), 220–261 (SDLL…KIIG), and 268–310 (REKL…SLLG). Geranylgeranyl diphosphate is bound by residues 198–200 (HAG) and 240–243 (RPEK). 2 residues coordinate Zn(2+): Asp246 and Cys248. Residues Tyr249 and 249–252 (YSWW) contribute to the geranylgeranyl diphosphate site. His298 is a Zn(2+) binding site.

This sequence belongs to the protein prenyltransferase subunit beta family. Heterotrimer composed of RABGGTA, RABGGTB and CHM; within this trimer, RABGGTA and RABGGTB form the catalytic component B, while CHM (component A) mediates peptide substrate binding. The Rab GGTase dimer (RGGT) interacts with CHM (component A) prior to Rab protein binding; the association is stabilized by geranylgeranyl pyrophosphate (GGpp). The CHM:RGGT:Rab complex is destabilized by GGpp. Interaction of RABGGTB with prenylated PTP4A2 precludes its association with RABGGTA and inhibits enzyme activity. Interacts with CHODL. Interacts with non-phosphorylated form of RAB8A; phosphorylation of RAB8A at 'Thr-72' disrupts this interaction. The cofactor is Zn(2+). In terms of tissue distribution, ubiquitous. Detected in all the major organs in adult animals.

The enzyme catalyses geranylgeranyl diphosphate + L-cysteinyl-[protein] = S-geranylgeranyl-L-cysteinyl-[protein] + diphosphate. The enzymatic reaction requires the aid of a Rab escort protein (also called component A), such as CHM. In terms of biological role, catalyzes the transfer of a geranylgeranyl moiety from geranylgeranyl diphosphate to both cysteines of Rab proteins with the C-terminal sequence -XXCC, -XCXC and -CCXX, such as RAB1A, RAB3A, RAB5A and RAB7A. The chain is Geranylgeranyl transferase type-2 subunit beta (Rabggtb) from Mus musculus (Mouse).